The chain runs to 203 residues: Urease accessory protein UreG (203 aa).

13–20 (GPVGSGKT) is a binding site for GTP.

The protein belongs to the SIMIBI class G3E GTPase family. UreG subfamily. As to quaternary structure, homodimer. UreD, UreF and UreG form a complex that acts as a GTP-hydrolysis-dependent molecular chaperone, activating the urease apoprotein by helping to assemble the nickel containing metallocenter of UreC. The UreE protein probably delivers the nickel.

The protein localises to the cytoplasm. Functionally, facilitates the functional incorporation of the urease nickel metallocenter. This process requires GTP hydrolysis, probably effectuated by UreG. The sequence is that of Urease accessory protein UreG from Psychromonas ingrahamii (strain DSM 17664 / CCUG 51855 / 37).